A 322-amino-acid polypeptide reads, in one-letter code: DNA repair and recombination protein RadA (322 aa).

105–112 (GMFGSGKT) contributes to the ATP binding site.

This sequence belongs to the eukaryotic RecA-like protein family.

Involved in DNA repair and in homologous recombination. Binds and assemble on single-stranded DNA to form a nucleoprotein filament. Hydrolyzes ATP in a ssDNA-dependent manner and promotes DNA strand exchange between homologous DNA molecules. The polypeptide is DNA repair and recombination protein RadA (Methanococcus maripaludis (Methanococcus deltae)).